The following is a 118-amino-acid chain: UPF0145 protein PTO0347 (118 aa).

This sequence belongs to the UPF0145 family.

The protein is UPF0145 protein PTO0347 of Picrophilus torridus (strain ATCC 700027 / DSM 9790 / JCM 10055 / NBRC 100828 / KAW 2/3).